Reading from the N-terminus, the 148-residue chain is Protein-export protein SecB (148 aa).

The protein belongs to the SecB family. Homotetramer, a dimer of dimers. One homotetramer interacts with 1 SecA dimer.

It is found in the cytoplasm. In terms of biological role, one of the proteins required for the normal export of preproteins out of the cell cytoplasm. It is a molecular chaperone that binds to a subset of precursor proteins, maintaining them in a translocation-competent state. It also specifically binds to its receptor SecA. This Psychrobacter arcticus (strain DSM 17307 / VKM B-2377 / 273-4) protein is Protein-export protein SecB.